We begin with the raw amino-acid sequence, 101 residues long: uncharacterized protein (101 aa).

Its subcellular location is the plastid. The protein localises to the chloroplast. This is an uncharacterized protein from Chlamydomonas reinhardtii (Chlamydomonas smithii).